Here is a 481-residue protein sequence, read N- to C-terminus: Protein nucleotidyltransferase YdiU (481 aa).

ATP is bound by residues G85, G87, R88, K108, D120, G121, R172, and R179. The active-site Proton acceptor is the D248. 2 residues coordinate Mg(2+): N249 and D258. D258 lines the ATP pocket.

The protein belongs to the SELO family. Requires Mg(2+) as cofactor. Mn(2+) is required as a cofactor.

The catalysed reaction is L-seryl-[protein] + ATP = 3-O-(5'-adenylyl)-L-seryl-[protein] + diphosphate. It catalyses the reaction L-threonyl-[protein] + ATP = 3-O-(5'-adenylyl)-L-threonyl-[protein] + diphosphate. It carries out the reaction L-tyrosyl-[protein] + ATP = O-(5'-adenylyl)-L-tyrosyl-[protein] + diphosphate. The enzyme catalyses L-histidyl-[protein] + UTP = N(tele)-(5'-uridylyl)-L-histidyl-[protein] + diphosphate. The catalysed reaction is L-seryl-[protein] + UTP = O-(5'-uridylyl)-L-seryl-[protein] + diphosphate. It catalyses the reaction L-tyrosyl-[protein] + UTP = O-(5'-uridylyl)-L-tyrosyl-[protein] + diphosphate. Functionally, nucleotidyltransferase involved in the post-translational modification of proteins. It can catalyze the addition of adenosine monophosphate (AMP) or uridine monophosphate (UMP) to a protein, resulting in modifications known as AMPylation and UMPylation. In Cereibacter sphaeroides (strain ATCC 17025 / ATH 2.4.3) (Rhodobacter sphaeroides), this protein is Protein nucleotidyltransferase YdiU.